The sequence spans 61 residues: Small ribosomal subunit protein uS14B (61 aa).

Zn(2+) contacts are provided by Cys24, Cys27, Cys40, and Cys43.

Belongs to the universal ribosomal protein uS14 family. Zinc-binding uS14 subfamily. As to quaternary structure, part of the 30S ribosomal subunit. Contacts proteins S3 and S10. Zn(2+) is required as a cofactor.

Functionally, binds 16S rRNA, required for the assembly of 30S particles and may also be responsible for determining the conformation of the 16S rRNA at the A site. The chain is Small ribosomal subunit protein uS14B from Oceanobacillus iheyensis (strain DSM 14371 / CIP 107618 / JCM 11309 / KCTC 3954 / HTE831).